Reading from the N-terminus, the 372-residue chain is Actin-related protein 2/3 complex subunit 1B (372 aa).

WD repeat units lie at residues 6–45 (FLVE…WVQV), 50–89 (EHNG…WKPT), 94–135 (RINR…WVCK), 140–179 (PIRS…VEER), 242–280 (SETL…GKLS), and 324–367 (LHKN…SALK).

It belongs to the WD repeat ARPC1 family. In terms of assembly, component of the Arp2/3 complex composed of ACTR2/ARP2, ACTR3/ARP3, ARPC1B/p41-ARC, ARPC2/p34-ARC, ARPC3/p21-ARC, ARPC4/p20-ARC and ARPC5/p16-ARC.

It is found in the cytoplasm. It localises to the cytoskeleton. The protein localises to the nucleus. Its function is as follows. Component of the Arp2/3 complex, a multiprotein complex that mediates actin polymerization upon stimulation by nucleation-promoting factor (NPF). The Arp2/3 complex mediates the formation of branched actin networks in the cytoplasm, providing the force for cell motility. In addition to its role in the cytoplasmic cytoskeleton, the Arp2/3 complex also promotes actin polymerization in the nucleus, thereby regulating gene transcription and repair of damaged DNA. The Arp2/3 complex promotes homologous recombination (HR) repair in response to DNA damage by promoting nuclear actin polymerization, leading to drive motility of double-strand breaks (DSBs). This chain is Actin-related protein 2/3 complex subunit 1B (ARPC1B), found in Bos taurus (Bovine).